The sequence spans 488 residues: Phenylalanine--tRNA ligase alpha subunit (488 aa).

Residues T315, 354 to 356, F394, and F419 contribute to the L-phenylalanine site; that span reads QLD.

This sequence belongs to the class-II aminoacyl-tRNA synthetase family. Phe-tRNA synthetase alpha subunit type 2 subfamily. As to quaternary structure, tetramer of two alpha and two beta subunits. It depends on Mg(2+) as a cofactor.

It is found in the cytoplasm. The catalysed reaction is tRNA(Phe) + L-phenylalanine + ATP = L-phenylalanyl-tRNA(Phe) + AMP + diphosphate + H(+). This Pyrobaculum calidifontis (strain DSM 21063 / JCM 11548 / VA1) protein is Phenylalanine--tRNA ligase alpha subunit.